The chain runs to 955 residues: Anoctamin-4 (955 aa).

The Extracellular portion of the chain corresponds to 1–352 (MEASSSGITN…FGEKIGLYFA (352 aa)). The interval 72–100 (CKDDDSLLHPGNLTSTSDDASRLEAGGET) is disordered. N-linked (GlcNAc...) asparagine glycans are attached at residues Asn83, Asn105, Asn257, and Asn288. Residues 353 to 373 (WLGWYTGMLFPAAFIGLFVFL) traverse the membrane as a helical segment. Topologically, residues 374–424 (YGVTTLDHSQVSKEVCQATDIIMCPVCDKYCPFMRLSDSCVYAKVTHLFDN) are cytoplasmic. The chain crosses the membrane as a helical span at residues 425-445 (GATVFFAVFMAVWATVFLEFW). Over 446–505 (KRRRAVIAYDWDLIDWEEEEEEIRPQFEAKYSKKERMNPISGKPEPYQAFTDKCSRLIVS) the chain is Extracellular. Residues 506–526 (ASGIFFMICVVIAAVFGIVIY) traverse the membrane as a helical segment. The Cytoplasmic portion of the chain corresponds to 527 to 547 (RVVTVSTFAAFKWALIRNNSQ). Residues 548-568 (VATTGTAVCINFCIIMLLNVL) traverse the membrane as a helical segment. At 569-595 (YEKVALLLTNLEQPRTESEWENSFTLK) the chain is on the extracellular side. The helical transmembrane segment at 596 to 616 (MFLFQFVNLNSSTFYIAFFLG) threads the bilayer. Residues 617 to 715 (RFTGHPGAYL…AYGLFDEYLE (99 aa)) are Cytoplasmic-facing. Residues 716-736 (MILQFGFTTIFVAAFPLAPLL) form a helical membrane-spanning segment. The Extracellular segment spans residues 737–768 (ALLNNIIEIRLDAYKFVTQWRRPLASRAKDIG). The helical transmembrane segment at 769–789 (IWYGILEGIGILSVITNAFVI) threads the bilayer. Over 790–885 (AITSDFIPRL…QFWHVLAARL (96 aa)) the chain is Cytoplasmic. The helical transmembrane segment at 886 to 906 (AFIIVFEHLVFCIKHLISYLI) threads the bilayer. Residues 907-955 (PDLPKDLRDRMRREKYLIQEMMYEAELERLQKERKERKKNGKAHHNEWP) are Extracellular-facing.

The protein belongs to the anoctamin family.

The protein resides in the cell membrane. It catalyses the reaction a 1,2-diacyl-sn-glycero-3-phospho-L-serine(in) = a 1,2-diacyl-sn-glycero-3-phospho-L-serine(out). The catalysed reaction is a beta-D-galactosyl-(1&lt;-&gt;1')-N-acylsphing-4-enine(out) = a beta-D-galactosyl-(1&lt;-&gt;1')-N-acylsphing-4-enine(in). It carries out the reaction a 1,2-diacyl-sn-glycero-3-phosphocholine(in) = a 1,2-diacyl-sn-glycero-3-phosphocholine(out). In terms of biological role, has calcium-dependent phospholipid scramblase activity; scrambles phosphatidylserine, phosphatidylcholine and galactosylceramide. Does not exhibit calcium-activated chloride channel (CaCC) activity. This chain is Anoctamin-4 (ANO4), found in Homo sapiens (Human).